The following is a 217-amino-acid chain: Probable GTP-binding protein EngB (217 aa).

The EngB-type G domain maps to 27 to 201; that stretch reads GGVEIAFAGR…AQTLSGWYLA (175 aa). GTP contacts are provided by residues 35–42, 62–66, 80–83, 147–150, and 180–182; these read GRSNAGKS, GRTQL, DLPG, TKAD, and FSS. 2 residues coordinate Mg(2+): S42 and T64.

Belongs to the TRAFAC class TrmE-Era-EngA-EngB-Septin-like GTPase superfamily. EngB GTPase family. Requires Mg(2+) as cofactor.

Necessary for normal cell division and for the maintenance of normal septation. The polypeptide is Probable GTP-binding protein EngB (Aeromonas salmonicida (strain A449)).